The following is a 244-amino-acid chain: rRNA adenine N-6-methyltransferase (244 aa).

S-adenosyl-L-methionine-binding residues include asparagine 11, isoleucine 13, glycine 38, glutamate 59, aspartate 84, and asparagine 101.

It belongs to the class I-like SAM-binding methyltransferase superfamily. rRNA adenine N(6)-methyltransferase family.

The enzyme catalyses adenosine(2085) in 23S rRNA + 2 S-adenosyl-L-methionine = N(6)-dimethyladenosine(2085) in 23S rRNA + 2 S-adenosyl-L-homocysteine + 2 H(+). Functionally, this protein produces a dimethylation of the adenine residue at position 2085 in 23S rRNA, resulting in reduced affinity between ribosomes and macrolide-lincosamide-streptogramin B antibiotics. In Bacillus subtilis, this protein is rRNA adenine N-6-methyltransferase (ermC').